The following is a 99-amino-acid chain: UPF0235 protein Sbal223_1335 (99 aa).

Belongs to the UPF0235 family.

The sequence is that of UPF0235 protein Sbal223_1335 from Shewanella baltica (strain OS223).